Consider the following 482-residue polypeptide: Probable metalloreductase AIM14 (482 aa).

Helical transmembrane passes span 16–36, 50–70, 87–106, 123–143, 155–175, 182–202, and 205–225; these read VKYG…VATV, SLPW…LGVW, GRMA…KYWP, IIVV…FVEG, LLGV…VALF, LFYV…LFHA, and PVTL…FIKF. Residues 86–198 enclose the Ferric oxidoreductase domain; it reads FGRMAYCLLP…ITIGMFVVLI (113 aa). The FAD-binding FR-type domain occupies 225–348; sequence FQTYSATPVS…GGSGISLAIP (124 aa).

This sequence belongs to the ferric reductase (FRE) family. AIM14 subfamily.

The protein resides in the membrane. Probable cell surface metalloreductase. May be involved in iron or copper homeostasis. This Meyerozyma guilliermondii (strain ATCC 6260 / CBS 566 / DSM 6381 / JCM 1539 / NBRC 10279 / NRRL Y-324) (Yeast) protein is Probable metalloreductase AIM14 (AIM14).